Consider the following 261-residue polypeptide: Carnitinyl-CoA dehydratase (261 aa).

The active-site Nucleophile is the Glu111. The Proton acceptor role is filled by Glu131.

It belongs to the enoyl-CoA hydratase/isomerase family.

The catalysed reaction is (R)-carnitinyl-CoA = crotonobetainyl-CoA + H2O. It functions in the pathway amine and polyamine metabolism; carnitine metabolism. In terms of biological role, catalyzes the reversible dehydration of L-carnitinyl-CoA to crotonobetainyl-CoA. The chain is Carnitinyl-CoA dehydratase from Salmonella arizonae (strain ATCC BAA-731 / CDC346-86 / RSK2980).